The sequence spans 160 residues: MLVSKSNGFNASAVLGSGSYNENKSSKHMELLAHSILKLICKEAASETYRGALETLQKMMSECIYQEGNAFVIMGAGEQLKRIKYEVGENNLKVFNVHFNNNHELVSSGEPDVICLSKQVWENLLIKLKLENNENVFSETKKLSNKNNADQFFECAKRNE.

The polypeptide is Protein YpjC (ypjC) (Escherichia coli (strain K12)).